A 423-amino-acid polypeptide reads, in one-letter code: Phaseolin (423 aa).

An N-terminal signal peptide occupies residues 1–21; it reads RRVPLLLLGILFLASLSASFA. Asparagine 28 carries an N-linked (GlcNAc...) asparagine glycan. 2 consecutive Cupin type-1 domains span residues 35 to 193 and 228 to 383; these read FYFS…EKIN and KSLD…EDVQ. 4 N-linked (GlcNAc...) asparagine glycosylation sites follow: asparagine 243, asparagine 332, asparagine 390, and asparagine 396. Residues 397–423 form a disordered region; sequence GSYHKNAHPHEQEQQKQQKGRKGAFVY. Basic residues predominate over residues 414-423; it reads QKGRKGAFVY.

The protein belongs to the 7S seed storage protein family. In terms of assembly, homotrimer.

Its subcellular location is the vacuole. It is found in the aleurone grain. In terms of biological role, major seed storage protein. The sequence is that of Phaseolin (PHS) from Phaseolus lunatus (Lima bean).